A 657-amino-acid polypeptide reads, in one-letter code: Splicing factor Cactin (657 aa).

The span at methionine 1–glutamate 15 shows a compositional bias: basic residues. Disordered stretches follow at residues methionine 1–leucine 83, glutamine 369–lysine 406, and alanine 472–serine 503. Coiled coils occupy residues serine 23–alanine 77 and arginine 352–isoleucine 403. Positions glutamate 26–arginine 60 are enriched in basic and acidic residues. The segment covering alanine 61–alanine 72 has biased composition (basic residues). Acidic residues predominate over residues glutamate 389–glutamate 401. Residues proline 489–serine 503 show a composition bias toward low complexity.

It belongs to the CACTIN family. Expressed in pharynx, intestine, vulva and spermatheca (at protein level).

The protein resides in the nucleus. The protein localises to the cytoplasm. In terms of biological role, plays a role in pre-mRNA splicing by facilitating excision of a subset of introns. Plays a role during early embryonic development. Required for the distal tip cell migration at the end of larval development and for gonad morphogenesis. In Caenorhabditis elegans, this protein is Splicing factor Cactin (cacn-1).